The sequence spans 479 residues: Cobyric acid synthase (479 aa).

The GATase cobBQ-type domain occupies threonine 250–alanine 442. Cysteine 331 serves as the catalytic Nucleophile. Histidine 434 is a catalytic residue.

This sequence belongs to the CobB/CobQ family. CobQ subfamily.

It functions in the pathway cofactor biosynthesis; adenosylcobalamin biosynthesis. Functionally, catalyzes amidations at positions B, D, E, and G on adenosylcobyrinic A,C-diamide. NH(2) groups are provided by glutamine, and one molecule of ATP is hydrogenolyzed for each amidation. This chain is Cobyric acid synthase, found in Variovorax paradoxus (strain S110).